The sequence spans 255 residues: Tryptophan synthase alpha chain (255 aa).

Residues glutamate 49 and aspartate 60 each act as proton acceptor in the active site.

This sequence belongs to the TrpA family. Tetramer of two alpha and two beta chains.

It carries out the reaction (1S,2R)-1-C-(indol-3-yl)glycerol 3-phosphate + L-serine = D-glyceraldehyde 3-phosphate + L-tryptophan + H2O. Its pathway is amino-acid biosynthesis; L-tryptophan biosynthesis; L-tryptophan from chorismate: step 5/5. Its function is as follows. The alpha subunit is responsible for the aldol cleavage of indoleglycerol phosphate to indole and glyceraldehyde 3-phosphate. In Desulfovibrio desulfuricans (strain ATCC 27774 / DSM 6949 / MB), this protein is Tryptophan synthase alpha chain.